An 85-amino-acid polypeptide reads, in one-letter code: V-type proton ATPase subunit f (85 aa).

2 helical membrane-spanning segments follow: residues 13–33 (CTGL…LFSI) and 56–76 (CLGA…QVIV).

V-ATPase is a heteromultimeric enzyme composed of a peripheral catalytic V1 complex (components A to H) attached to an integral membrane V0 proton pore complex (components: a, c, c', c'', d, e, f and VOA1).

Its subcellular location is the endoplasmic reticulum membrane. Its function is as follows. Accessory component of the V0 complex of vacuolar(H+)-ATPase (V-ATPase), a multisubunit enzyme composed of a peripheral complex (V1) that hydrolyzes ATP and a membrane integral complex (V0) that translocates protons. V-ATPase is responsible for acidifying and maintaining the pH of intracellular compartments. This is V-type proton ATPase subunit f from Schizosaccharomyces pombe (strain 972 / ATCC 24843) (Fission yeast).